The following is a 413-amino-acid chain: Probable tRNA pseudouridine synthase D (413 aa).

Catalysis depends on Asp-97, which acts as the Nucleophile. The TRUD domain occupies 167 to 370; that stretch reads AVPNYYGYQR…YGSYRRARLE (204 aa).

Belongs to the pseudouridine synthase TruD family.

The enzyme catalyses uridine(13) in tRNA = pseudouridine(13) in tRNA. In terms of biological role, could be responsible for synthesis of pseudouridine from uracil-13 in transfer RNAs. This chain is Probable tRNA pseudouridine synthase D, found in Pyrobaculum arsenaticum (strain DSM 13514 / JCM 11321 / PZ6).